Here is a 426-residue protein sequence, read N- to C-terminus: AP-1 complex subunit mu-1 (426 aa).

Residues 167–425 enclose the MHD domain; the sequence is KNEVFLDVIE…TQNGTEYSIR (259 aa).

The protein belongs to the adaptor complexes medium subunit family. Adaptor protein complex 1 (AP-1) is a heterotetramer composed of two large adaptins (gamma-type subunit apl4 and beta-type subunit apl2), a medium adaptin (mu-type subunit apm1) and a small adaptin (sigma-type subunit aps1). AP-1 interacts with clathrin. Interacts with sad1.

The protein localises to the cytoplasmic vesicle. It is found in the clathrin-coated vesicle membrane. Its subcellular location is the membrane. It localises to the clathrin-coated pit. In terms of biological role, component of the adaptor complexes which link clathrin to receptors in coated vesicles. Clathrin-associated protein complexes are believed to interact with the cytoplasmic tails of membrane proteins, leading to their selection and concentration. This chain is AP-1 complex subunit mu-1 (apm1), found in Schizosaccharomyces pombe (strain 972 / ATCC 24843) (Fission yeast).